The primary structure comprises 403 residues: Enoyl-[acyl-carrier-protein] reductase [NADH] (403 aa).

NAD(+) is bound by residues Gly49–Tyr54, Phe75–Glu76, Asp112–Ala113, and Leu141–Ala142. Tyr227 lines the substrate pocket. The active-site Proton donor is the Tyr237. Residues Lys246 and Val276–Thr278 each bind NAD(+).

Belongs to the TER reductase family. As to quaternary structure, monomer.

The enzyme catalyses a 2,3-saturated acyl-[ACP] + NAD(+) = a (2E)-enoyl-[ACP] + NADH + H(+). It functions in the pathway lipid metabolism; fatty acid biosynthesis. In terms of biological role, involved in the final reduction of the elongation cycle of fatty acid synthesis (FAS II). Catalyzes the reduction of a carbon-carbon double bond in an enoyl moiety that is covalently linked to an acyl carrier protein (ACP). This chain is Enoyl-[acyl-carrier-protein] reductase [NADH], found in Pseudomonas putida (strain GB-1).